Here is a 430-residue protein sequence, read N- to C-terminus: Glutamate-1-semialdehyde 2,1-aminomutase (430 aa).

Position 267 is an N6-(pyridoxal phosphate)lysine (lysine 267).

The protein belongs to the class-III pyridoxal-phosphate-dependent aminotransferase family. HemL subfamily. As to quaternary structure, homodimer. Requires pyridoxal 5'-phosphate as cofactor.

It is found in the cytoplasm. The catalysed reaction is (S)-4-amino-5-oxopentanoate = 5-aminolevulinate. It functions in the pathway porphyrin-containing compound metabolism; protoporphyrin-IX biosynthesis; 5-aminolevulinate from L-glutamyl-tRNA(Glu): step 2/2. This Desulfotalea psychrophila (strain LSv54 / DSM 12343) protein is Glutamate-1-semialdehyde 2,1-aminomutase.